A 78-amino-acid polypeptide reads, in one-letter code: Translation initiation factor IF-1, chloroplastic (78 aa).

Positions 1 to 72 constitute an S1-like domain; sequence MKKQNLIEME…TKGRITYRLR (72 aa).

It belongs to the IF-1 family. In terms of assembly, component of the 30S ribosomal translation pre-initiation complex which assembles on the 30S ribosome in the order IF-2 and IF-3, IF-1 and N-formylmethionyl-tRNA(fMet); mRNA recruitment can occur at any time during PIC assembly.

The protein resides in the plastid. Its subcellular location is the chloroplast. Functionally, one of the essential components for the initiation of protein synthesis. Stabilizes the binding of IF-2 and IF-3 on the 30S subunit to which N-formylmethionyl-tRNA(fMet) subsequently binds. Helps modulate mRNA selection, yielding the 30S pre-initiation complex (PIC). Upon addition of the 50S ribosomal subunit IF-1, IF-2 and IF-3 are released leaving the mature 70S translation initiation complex. The protein is Translation initiation factor IF-1, chloroplastic of Chaetosphaeridium globosum (Charophycean green alga).